The chain runs to 229 residues: NAD(P)H-quinone oxidoreductase subunit K, chloroplastic (229 aa).

4 residues coordinate [4Fe-4S] cluster: C43, C44, C108, and C139.

Belongs to the complex I 20 kDa subunit family. As to quaternary structure, NDH is composed of at least 16 different subunits, 5 of which are encoded in the nucleus. Requires [4Fe-4S] cluster as cofactor.

The protein resides in the plastid. It is found in the chloroplast thylakoid membrane. It catalyses the reaction a plastoquinone + NADH + (n+1) H(+)(in) = a plastoquinol + NAD(+) + n H(+)(out). It carries out the reaction a plastoquinone + NADPH + (n+1) H(+)(in) = a plastoquinol + NADP(+) + n H(+)(out). NDH shuttles electrons from NAD(P)H:plastoquinone, via FMN and iron-sulfur (Fe-S) centers, to quinones in the photosynthetic chain and possibly in a chloroplast respiratory chain. The immediate electron acceptor for the enzyme in this species is believed to be plastoquinone. Couples the redox reaction to proton translocation, and thus conserves the redox energy in a proton gradient. The polypeptide is NAD(P)H-quinone oxidoreductase subunit K, chloroplastic (Aethionema cordifolium (Lebanon stonecress)).